Consider the following 437-residue polypeptide: ATP-dependent RNA helicase RhlB (437 aa).

The Q motif motif lies at 9 to 37 (QKFADLGLEPTVLEGLDAQGFHYCTPIQA). A Helicase ATP-binding domain is found at 40–219 (LPVVLTGQDI…FEHMNSPESV (180 aa)). 53 to 60 (AQTGTGKT) serves as a coordination point for ATP. Residues 165–168 (DEAD) carry the DEAD box motif. The 146-residue stretch at 245 to 390 (RLLQTLIEEE…LSKYNSEALL (146 aa)) folds into the Helicase C-terminal domain. The tract at residues 395 to 437 (APLRLQRTPRQGGNRRPNGNRQGQGQSRPRNNNRRHPQSQKQQ) is disordered. Positions 400 to 424 (QRTPRQGGNRRPNGNRQGQGQSRPR) are enriched in low complexity. Positions 425–437 (NNNRRHPQSQKQQ) are enriched in basic residues.

It belongs to the DEAD box helicase family. RhlB subfamily. Component of the RNA degradosome, which is a multiprotein complex involved in RNA processing and mRNA degradation.

The protein localises to the cytoplasm. The catalysed reaction is ATP + H2O = ADP + phosphate + H(+). Functionally, DEAD-box RNA helicase involved in RNA degradation. Has RNA-dependent ATPase activity and unwinds double-stranded RNA. In Photobacterium profundum (strain SS9), this protein is ATP-dependent RNA helicase RhlB.